The chain runs to 186 residues: NADH dehydrogenase [ubiquinone] 1 beta subcomplex subunit 8, mitochondrial (186 aa).

The transit peptide at 1-28 (MAVARAGVLGVQWLQRASRNVMPLGART) directs the protein to the mitochondrion. A helical transmembrane segment spans residues 133 to 153 (LFGFLAFMIFMCWVGDVYPVY).

It belongs to the complex I NDUFB8 subunit family. In terms of assembly, complex I is composed of 45 different subunits.

The protein resides in the mitochondrion inner membrane. In terms of biological role, accessory subunit of the mitochondrial membrane respiratory chain NADH dehydrogenase (Complex I), that is believed not to be involved in catalysis. Complex I functions in the transfer of electrons from NADH to the respiratory chain. The immediate electron acceptor for the enzyme is believed to be ubiquinone. The polypeptide is NADH dehydrogenase [ubiquinone] 1 beta subcomplex subunit 8, mitochondrial (NDUFB8) (Homo sapiens (Human)).